A 357-amino-acid chain; its full sequence is MIIHISNSSSYIWLSVYFYKEPLSLKLLISIFELSSCILCGYILNLSIFVMLKIQLFHKNLMFLTVPLFAIWHELIIGKFITIAYRLKIVNPGFELGEHTVFWTNDPDKTLEVAGSSGLELLIFGGFLQWHTIYSIVFGILAVATERTIASVYIKDYESKERIYIPIILTIISQLLSISISLAIITQSIGPFLARLPFVICAPLSVLVFLFIKHTNQSLLKEICNPKRTRIFTVSQQCQVKENLRALRLGTRLVVVVIFYISICGFGIAALTFGLIPAGFGHLIENFLFLHPYPICLTAMFSIPQWRDQFKKSILPFLNRRLAKIEQVVTVRIEVNVQNSSSVETDIYFRQLTESWT.

Transmembrane regions (helical) follow at residues 31–51 (IFEL…IFVM), 61–81 (LMFL…GKFI), 121–141 (LLIF…FGIL), 165–185 (IPII…LAII), 192–212 (FLAR…FLFI), 253–273 (LVVV…ALTF), and 283–303 (LIEN…MFSI).

The protein belongs to the nematode receptor-like protein sre family.

It localises to the membrane. In Caenorhabditis elegans, this protein is Serpentine receptor class epsilon-30 (sre-30).